A 141-amino-acid polypeptide reads, in one-letter code: Large ribosomal subunit protein uL11 (141 aa).

The protein belongs to the universal ribosomal protein uL11 family. In terms of assembly, part of the ribosomal stalk of the 50S ribosomal subunit. Interacts with L10 and the large rRNA to form the base of the stalk. L10 forms an elongated spine to which L12 dimers bind in a sequential fashion forming a multimeric L10(L12)X complex. In terms of processing, one or more lysine residues are methylated.

Forms part of the ribosomal stalk which helps the ribosome interact with GTP-bound translation factors. This Limosilactobacillus reuteri (strain DSM 20016) (Lactobacillus reuteri) protein is Large ribosomal subunit protein uL11.